Reading from the N-terminus, the 161-residue chain is MFATAEFWILACLVAFFAILGYFKVHRTLAATLDKRAADIAAELDEARRLREEAQQLLASYQRKQREAMKEAEDIVAQAKVEAEQLAKETRANMEIQVERRTKLAEDKIAQAETQALNDVRATAAEVAVGAARRVIAAKVDAGKDAEFVEKSISELTSKLH.

The chain crosses the membrane as a helical span at residues 1-21 (MFATAEFWILACLVAFFAILG).

This sequence belongs to the ATPase B chain family. In terms of assembly, F-type ATPases have 2 components, F(1) - the catalytic core - and F(0) - the membrane proton channel. F(1) has five subunits: alpha(3), beta(3), gamma(1), delta(1), epsilon(1). F(0) has three main subunits: a(1), b(2) and c(10-14). The alpha and beta chains form an alternating ring which encloses part of the gamma chain. F(1) is attached to F(0) by a central stalk formed by the gamma and epsilon chains, while a peripheral stalk is formed by the delta and b chains.

The protein localises to the cell inner membrane. Its function is as follows. F(1)F(0) ATP synthase produces ATP from ADP in the presence of a proton or sodium gradient. F-type ATPases consist of two structural domains, F(1) containing the extramembraneous catalytic core and F(0) containing the membrane proton channel, linked together by a central stalk and a peripheral stalk. During catalysis, ATP synthesis in the catalytic domain of F(1) is coupled via a rotary mechanism of the central stalk subunits to proton translocation. In terms of biological role, component of the F(0) channel, it forms part of the peripheral stalk, linking F(1) to F(0). This is ATP synthase subunit b 1 from Parvibaculum lavamentivorans (strain DS-1 / DSM 13023 / NCIMB 13966).